Reading from the N-terminus, the 435-residue chain is MTTVPEPSAELLQRAGAVRLAAVDLGQTDDQQRADALQAMADALAERAEVIVAANREDLERSAAEGLAPALMARLKLDAGKLRGAIDGVRKLASLPDPLGRRQLHRELDQGLVLERISVPLGVVGVIFEARPDAVVQIASLAIRSGNGAMLKGGSEARCTNEAVMEALKLGLGRSAVAPDALTLLTTRQESLALLRLDGLVDLIIPRGSNELVRFIQDNTRIPVLGHADGICHLYVDAAADVDQAVRIAIDSKTQYPAACNAIETLLVHASIAPAFLASAVPAFQAAGVTLRGDEHSRQHGISDAATDEDWRTEYLDMILAVRVVPSMDAALEHIRRHGSRHTEAIATTDDQAAERFLGAVDSAGVYLNCSTRFADGFRYGFGAEVGISTQTLPPRGPVGLDGLVTYRYRLRGDGHIAADFADGTRSFTHTDLPL.

It belongs to the gamma-glutamyl phosphate reductase family.

The protein resides in the cytoplasm. It carries out the reaction L-glutamate 5-semialdehyde + phosphate + NADP(+) = L-glutamyl 5-phosphate + NADPH + H(+). It participates in amino-acid biosynthesis; L-proline biosynthesis; L-glutamate 5-semialdehyde from L-glutamate: step 2/2. Functionally, catalyzes the NADPH-dependent reduction of L-glutamate 5-phosphate into L-glutamate 5-semialdehyde and phosphate. The product spontaneously undergoes cyclization to form 1-pyrroline-5-carboxylate. This is Gamma-glutamyl phosphate reductase from Parasynechococcus marenigrum (strain WH8102).